The sequence spans 242 residues: Uridylate kinase (242 aa).

11 to 14 (KLSG) is an ATP binding site. An involved in allosteric activation by GTP region spans residues 19–24 (GDKGVG). G53 lines the UMP pocket. ATP contacts are provided by G54 and R58. UMP contacts are provided by residues D73 and 134 to 141 (IGSPYFST). ATP is bound by residues N162, Y168, and D171.

Belongs to the UMP kinase family. In terms of assembly, homohexamer.

The protein localises to the cytoplasm. The enzyme catalyses UMP + ATP = UDP + ADP. Its pathway is pyrimidine metabolism; CTP biosynthesis via de novo pathway; UDP from UMP (UMPK route): step 1/1. With respect to regulation, allosterically activated by GTP. Inhibited by UTP. Catalyzes the reversible phosphorylation of UMP to UDP. This chain is Uridylate kinase, found in Streptococcus agalactiae serotype III (strain NEM316).